The chain runs to 253 residues: CD151 antigen (253 aa).

Residues 1 to 18 are Cytoplasmic-facing; sequence MGEFNEKKTTCGTVCLKY. Residues Cys11 and Cys15 are each lipidated (S-palmitoyl cysteine). Residues 19–39 traverse the membrane as a helical segment; that stretch reads LLFTYNCCFWLAGLAVMAVGI. Residues 40 to 57 lie on the Extracellular side of the membrane; the sequence is WTLALKSDYISLLASGTY. A helical transmembrane segment spans residues 58–78; sequence LATAYILVVAGTVVMVTGVLG. Topologically, residues 79–91 are cytoplasmic; that stretch reads CCATFKERRNLLR. The chain crosses the membrane as a helical span at residues 92 to 112; sequence LYFILLLIIFLLEIIAGILAY. Residues 113–221 are Extracellular-facing; it reads AYYQQLNTEL…LETFIQEHLR (109 aa). The N-linked (GlcNAc...) asparagine glycan is linked to Asn159. The chain crosses the membrane as a helical span at residues 222 to 242; the sequence is VIGAVGIGIACVQVFGMIFTC. 2 S-palmitoyl cysteine lipidation sites follow: Cys242 and Cys243. Residues 243–253 lie on the Cytoplasmic side of the membrane; the sequence is CLYRSLKLEHY.

This sequence belongs to the tetraspanin (TM4SF) family. Interacts with integrins ITGA3:ITGB1, ITGA5:ITGB1, ITGA3:ITGB1 and ITGA6:ITGB4 and with CD9 and CD181. Interacts (via the second extracellular domain) with integrin ITGAV:ITGB3. Interacts with ITGA3; this interaction modulates ITGA3 glycosylation pattern. Interacts with F11R. Interacts with RAC1 and CDC42; these interactions mediate physical association of RAC1 and CDC42 with integrin adhesion receptor complexes. Palmitoylated. Palmitoylation by ZDHHC2 regulates CD151 expression, association with other tetraspanin family proteins and function in cell adhesion. In terms of processing, ubiquitinated by RNF128 on lysine residues present in the tetraspanin amino terminus via 'Lys-48'-linked ubiquitin leading to proteasomal degradation. Expressed in a variety of tissues including vascular endothelium and epidermis. Expressed on erythroid cells, with a higher level of expression in erythroid precursors than on mature erythrocytes. Acts as a sensitive T-cell activation marker.

Its subcellular location is the cell membrane. Its function is as follows. Structural component of specialized membrane microdomains known as tetraspanin-enriched microdomains (TERMs), which act as platforms for receptor clustering and signaling. Plays a role in various cellular and molecular mechanism through its association with both integrin and non-integrin proteins. These interactions facilitate critical cellular functions, including cell-to-cell communication, wound healing, platelet aggregation, trafficking, cell motility, and angiogenesis. Via interaction with JAM-A/F11R and integrin ITGA3:ITGB1, promotes the recruitment of signaling molecules such as RAC1, CDC42 and RhoGTPases to facilitate the polarization of epithelial cells and the reorganization of the actin cytoskeleton, which are critical steps in cell migration process. Regulates the glycosylation pattern of ITGA3:ITGB1 thereby modulating its activity. Plays an essential role in the maintenance of central laminin-binding integrin ITGA6:ITGB4-containing adhesion complexes. Essential for the proper assembly of the glomerular and tubular basement membranes in kidney. Contributes to T-cell activation by modulating integrin signaling leading to activation of downstream targets PTK2 and MAPK1/MAPK3. Functionally, (Microbial infection) Plays a role in human papillomavirus 16/HPV-16 endocytosis upon binding to cell surface receptor. (Microbial infection) Plays a role in human cytomegalovirus entry into host cell by contributing to entry receptor binding, membrane fusion, or release of the capsid. The protein is CD151 antigen (CD151) of Homo sapiens (Human).